The following is a 686-amino-acid chain: Lysophospholipase 3 (686 aa).

The first 26 residues, 1 to 26, serve as a signal peptide directing secretion; that stretch reads MIRPLCSKIIISYIFAISQFLLAANA. Residues 39-592 enclose the PLA2c domain; that stretch reads SCPDDINLVR…KNYCWNGTLD (554 aa). N-linked (GlcNAc...) asparagine glycosylation is found at N56, N82, N129, N166, N221, N283, N313, N351, N495, N519, N547, N571, N588, and N614. Residue N659 is the site of GPI-anchor amidated asparagine attachment. The propeptide at 660 to 686 is removed in mature form; it reads SGSHLSGISVKFSAMIMLTLLMFTGAV.

It belongs to the lysophospholipase family.

The protein resides in the cell membrane. The enzyme catalyses a 1-acyl-sn-glycero-3-phosphocholine + H2O = sn-glycerol 3-phosphocholine + a fatty acid + H(+). In terms of biological role, sequentially removes both fatty acyl groups from diacylglycerophospholipids and therefore has both phospholipase A and lysophospholipase activities. Substrate preference is phosphatidylserine &gt; phosphatidylinositol. Does not cleave phosphatidylcholine, phosphatidylethanolamine, phosphatidic acid and phosphatidylinositol-bisphosphate. Mainly responsible for the degradation of phosphatidylinositol in vivo. The polypeptide is Lysophospholipase 3 (PLB3) (Saccharomyces cerevisiae (strain ATCC 204508 / S288c) (Baker's yeast)).